The sequence spans 376 residues: DNA methyltransferase CcrM (376 aa).

Residues 273-370 enclose the RAMA domain; the sequence is KATLSVMTGK…IDELRSVIRN (98 aa).

This sequence belongs to the N(4)/N(6)-methyltransferase family.

The enzyme catalyses a 2'-deoxyadenosine in DNA + S-adenosyl-L-methionine = an N(6)-methyl-2'-deoxyadenosine in DNA + S-adenosyl-L-homocysteine + H(+). Its function is as follows. A beta subtype methylase that recognizes the double-stranded sequence 5'-GANTC-3' and methylates A-2 on both strands. Overexpression leads to many branched and bloated cells, two to three times the size of wild-type cells, and cells that have 1-3 times the normal amount of DNA. Contributes to the accurate cell-cycle control of DNA replication and cellular morphology. Can fully replace its ortholog in C.crescentus. The protein is DNA methyltransferase CcrM (smeIM) of Rhizobium meliloti (strain 1021) (Ensifer meliloti).